A 376-amino-acid polypeptide reads, in one-letter code: uncharacterized protein (376 aa).

Belongs to the choline/ethanolamine kinase family.

This is an uncharacterized protein from Caenorhabditis elegans.